The chain runs to 204 residues: VQ motif-containing protein 13 (204 aa).

Basic and acidic residues predominate over residues 1–12 (MEKSPRYRDKAK). The interval 1-26 (MEKSPRYRDKAKNLLPSPSSCTTTPT) is disordered. Low complexity predominate over residues 16 to 26 (PSPSSCTTTPT). Phosphoserine is present on serine 17. A VQ motif is present at residues 46–55 (FKQVVQLLTG). Positions 56 to 90 (IPKNPTHQPDPRFPPFHSIPPIKAVTNKKQSSSFR) are disordered. Serine 73 and serine 128 each carry phosphoserine. At threonine 131 the chain carries Phosphothreonine. Residues 133 to 204 (LMSDPFYRPG…HSPAPSPHDH (72 aa)) form a disordered region. Residues 143–152 (SFSQSPSDSK) show a composition bias toward low complexity. Residues serine 147 and serine 173 each carry the phosphoserine modification. Phosphothreonine is present on residues threonine 177 and threonine 192. Phosphoserine is present on residues serine 196 and serine 200.

Post-translationally, phosphorylated on serine and threonine residues by MPK6.

The protein resides in the nucleus. Its function is as follows. May modulate WRKY transcription factor activities. This chain is VQ motif-containing protein 13, found in Arabidopsis thaliana (Mouse-ear cress).